A 165-amino-acid polypeptide reads, in one-letter code: MEKALVGITWEFVFQIVNTFIIFLLLRKLLFKPVLNIIESRENDIKSDLAEGEKAKNEGLALKKEYESKINFAKDEGQEIIKQATIRAEQKSDDIVNTAKKDALDIKEKANKDIEQERQKVINEIKNDISNIALLAASKVIEKDLDKSKHEELIENFIKEVGEAK.

Residues 5–25 traverse the membrane as a helical segment; it reads LVGITWEFVFQIVNTFIIFLL.

It belongs to the ATPase B chain family. In terms of assembly, F-type ATPases have 2 components, F(1) - the catalytic core - and F(0) - the membrane proton channel. F(1) has five subunits: alpha(3), beta(3), gamma(1), delta(1), epsilon(1). F(0) has three main subunits: a(1), b(2) and c(10-14). The alpha and beta chains form an alternating ring which encloses part of the gamma chain. F(1) is attached to F(0) by a central stalk formed by the gamma and epsilon chains, while a peripheral stalk is formed by the delta and b chains.

It is found in the cell membrane. Its function is as follows. F(1)F(0) ATP synthase produces ATP from ADP in the presence of a proton or sodium gradient. F-type ATPases consist of two structural domains, F(1) containing the extramembraneous catalytic core and F(0) containing the membrane proton channel, linked together by a central stalk and a peripheral stalk. During catalysis, ATP synthesis in the catalytic domain of F(1) is coupled via a rotary mechanism of the central stalk subunits to proton translocation. Functionally, component of the F(0) channel, it forms part of the peripheral stalk, linking F(1) to F(0). This Clostridioides difficile (strain 630) (Peptoclostridium difficile) protein is ATP synthase subunit b.